A 415-amino-acid polypeptide reads, in one-letter code: Putative glutamate--cysteine ligase 2 (415 aa).

The protein belongs to the glutamate--cysteine ligase type 2 family. YbdK subfamily.

It carries out the reaction L-cysteine + L-glutamate + ATP = gamma-L-glutamyl-L-cysteine + ADP + phosphate + H(+). ATP-dependent carboxylate-amine ligase which exhibits weak glutamate--cysteine ligase activity. This chain is Putative glutamate--cysteine ligase 2, found in Bordetella petrii (strain ATCC BAA-461 / DSM 12804 / CCUG 43448).